A 152-amino-acid chain; its full sequence is Small ribosomal subunit protein uS13 (152 aa).

It belongs to the universal ribosomal protein uS13 family. As to quaternary structure, part of the 30S ribosomal subunit. Forms a loose heterodimer with protein S19. Forms two bridges to the 50S subunit in the 70S ribosome.

Located at the top of the head of the 30S subunit, it contacts several helices of the 16S rRNA. In the 70S ribosome it contacts the 23S rRNA (bridge B1a) and protein L5 of the 50S subunit (bridge B1b), connecting the 2 subunits; these bridges are implicated in subunit movement. This Pyrobaculum aerophilum (strain ATCC 51768 / DSM 7523 / JCM 9630 / CIP 104966 / NBRC 100827 / IM2) protein is Small ribosomal subunit protein uS13.